A 149-amino-acid chain; its full sequence is Transcriptional repressor NrdR (149 aa).

A zinc finger spans residues Cys-3 to Cys-34. One can recognise an ATP-cone domain in the interval Pro-49–Asp-139.

Belongs to the NrdR family. Zn(2+) is required as a cofactor.

Negatively regulates transcription of bacterial ribonucleotide reductase nrd genes and operons by binding to NrdR-boxes. This is Transcriptional repressor NrdR from Verminephrobacter eiseniae (strain EF01-2).